The sequence spans 334 residues: O(6)-methylguanine-induced apoptosis 2 (334 aa).

Positions 1–60 are disordered; that stretch reads MDNSAQKNERTGKHPRRASEVQKGFTAAYPTQSSIPFKSQASVIPESEKKGFNSQAKRFP. The span at 7–20 shows a compositional bias: basic and acidic residues; that stretch reads KNERTGKHPRRASE. Residues 29–42 show a composition bias toward polar residues; the sequence is YPTQSSIPFKSQAS. 7 STPGR repeats span residues 67-74, 109-117, 148-155, 187-206, 225-257, 267-282, and 306-316; these read PGPGFYNV, PAANAYTIP, PAPNYYNA, GPPPGHYDINESLVKQSPNT, GPGPGYYNPSDCTKVPKKTLFPKNPILNFSAQP, PGPGQYEIVDYLGPRK, and LPGPATYKPEL. Tyr-72 carries the phosphotyrosine modification.

Belongs to the STPG1 family.

The protein localises to the cytoplasm. Its subcellular location is the nucleus. May positively contribute to the induction of apoptosis triggered by O(6)-methylguanine. The protein is O(6)-methylguanine-induced apoptosis 2 (STPG1) of Homo sapiens (Human).